The following is a 596-amino-acid chain: Elongation factor 4 (596 aa).

A tr-type G domain is found at 2-183 (KNIRNFSIIA…TIITKIPAPK (182 aa)). Residues 14 to 19 (DHGKST) and 130 to 133 (NKID) each bind GTP.

It belongs to the TRAFAC class translation factor GTPase superfamily. Classic translation factor GTPase family. LepA subfamily.

Its subcellular location is the cell inner membrane. The catalysed reaction is GTP + H2O = GDP + phosphate + H(+). Functionally, required for accurate and efficient protein synthesis under certain stress conditions. May act as a fidelity factor of the translation reaction, by catalyzing a one-codon backward translocation of tRNAs on improperly translocated ribosomes. Back-translocation proceeds from a post-translocation (POST) complex to a pre-translocation (PRE) complex, thus giving elongation factor G a second chance to translocate the tRNAs correctly. Binds to ribosomes in a GTP-dependent manner. This chain is Elongation factor 4, found in Campylobacter lari (strain RM2100 / D67 / ATCC BAA-1060).